We begin with the raw amino-acid sequence, 84 residues long: RNA-binding protein Hfq (84 aa).

The region spanning 9 to 68 is the Sm domain; that stretch reads DPYLNTLRKERVPVSIYLVNGIKLQGQIESFDQFVILLKNTVSQMVYKHAISTVVPGRPV.

This sequence belongs to the Hfq family. Homohexamer.

RNA chaperone that binds small regulatory RNA (sRNAs) and mRNAs to facilitate mRNA translational regulation in response to envelope stress, environmental stress and changes in metabolite concentrations. Also binds with high specificity to tRNAs. In Stutzerimonas stutzeri (strain A1501) (Pseudomonas stutzeri), this protein is RNA-binding protein Hfq.